Here is a 491-residue protein sequence, read N- to C-terminus: Serine hydroxymethyltransferase (491 aa).

(6S)-5,6,7,8-tetrahydrofolate is bound by residues L173 and 177–179 (GHL). K285 is subject to N6-(pyridoxal phosphate)lysine.

It belongs to the SHMT family. Homodimer. Pyridoxal 5'-phosphate serves as cofactor.

It localises to the cytoplasm. It catalyses the reaction (6R)-5,10-methylene-5,6,7,8-tetrahydrofolate + glycine + H2O = (6S)-5,6,7,8-tetrahydrofolate + L-serine. Its pathway is one-carbon metabolism; tetrahydrofolate interconversion. The protein operates within amino-acid biosynthesis; glycine biosynthesis; glycine from L-serine: step 1/1. Functionally, catalyzes the reversible interconversion of serine and glycine with tetrahydrofolate (THF) serving as the one-carbon carrier. This reaction serves as the major source of one-carbon groups required for the biosynthesis of purines, thymidylate, methionine, and other important biomolecules. Also exhibits THF-independent aldolase activity toward beta-hydroxyamino acids, producing glycine and aldehydes, via a retro-aldol mechanism. This chain is Serine hydroxymethyltransferase, found in Cutibacterium acnes (strain DSM 16379 / KPA171202) (Propionibacterium acnes).